Reading from the N-terminus, the 400-residue chain is Glutamyl-tRNA reductase (400 aa).

Residues 45–48, serine 103, 108–110, and glutamine 114 each bind substrate; these read TCNR and EDQ. Cysteine 46 acts as the Nucleophile in catalysis. 179–184 serves as a coordination point for NADP(+); that stretch reads GYGEIG.

It belongs to the glutamyl-tRNA reductase family. As to quaternary structure, homodimer.

The enzyme catalyses (S)-4-amino-5-oxopentanoate + tRNA(Glu) + NADP(+) = L-glutamyl-tRNA(Glu) + NADPH + H(+). The protein operates within porphyrin-containing compound metabolism; protoporphyrin-IX biosynthesis; 5-aminolevulinate from L-glutamyl-tRNA(Glu): step 1/2. Functionally, catalyzes the NADPH-dependent reduction of glutamyl-tRNA(Glu) to glutamate 1-semialdehyde (GSA). This is Glutamyl-tRNA reductase from Clostridium perfringens (strain ATCC 13124 / DSM 756 / JCM 1290 / NCIMB 6125 / NCTC 8237 / Type A).